A 308-amino-acid chain; its full sequence is Staphylococcal superantigen-like 4 (308 aa).

An N-terminal signal peptide occupies residues 1 to 30 (MKITTIAKTSLALGLLTTGVITTTTQAANA). Residues 32 to 117 (TLSSTKVEAP…TTKQVPTEIN (86 aa)) form a disordered region. 2 stretches are compositionally biased toward polar residues: residues 33-47 (LSST…TPPS) and 55-76 (SKPN…TANA). A compositionally biased stretch (low complexity) spans 77 to 93 (TTPPSTKVTTPPSTNTP). Polar residues predominate over residues 94 to 114 (QPMQSTKSDTPQSPTTKQVPT). Residues 180–278 (VDVFVVLEEN…VIKMKNGGKY (99 aa)) form a sialyl Lewis X-binding region.

It belongs to the staphylococcal/streptococcal toxin family.

It localises to the secreted. Its function is as follows. Secreted protein that plays a role in immune innate response inhibition by interfering with host TLR2-mediated pathway. The protein is Staphylococcal superantigen-like 4 of Staphylococcus aureus (strain NCTC 8325 / PS 47).